A 597-amino-acid chain; its full sequence is Elongation factor 4 (597 aa).

The region spanning 2-184 (QHIRNFSIIA…AVISRIPPPK (183 aa)) is the tr-type G domain. GTP is bound by residues 14–19 (DHGKST) and 131–134 (NKID).

It belongs to the TRAFAC class translation factor GTPase superfamily. Classic translation factor GTPase family. LepA subfamily.

Its subcellular location is the cell inner membrane. The enzyme catalyses GTP + H2O = GDP + phosphate + H(+). Functionally, required for accurate and efficient protein synthesis under certain stress conditions. May act as a fidelity factor of the translation reaction, by catalyzing a one-codon backward translocation of tRNAs on improperly translocated ribosomes. Back-translocation proceeds from a post-translocation (POST) complex to a pre-translocation (PRE) complex, thus giving elongation factor G a second chance to translocate the tRNAs correctly. Binds to ribosomes in a GTP-dependent manner. The chain is Elongation factor 4 from Nitrosospira multiformis (strain ATCC 25196 / NCIMB 11849 / C 71).